The following is a 366-amino-acid chain: Peroxisomal (S)-2-hydroxy-acid oxidase GLO4 (366 aa).

Residues 1-360 form the FMN hydroxy acid dehydrogenase domain; it reads MEDNLPVNVR…TRSHVMTEGD (360 aa). Residue Tyr27 participates in a 2-oxocarboxylate binding. FMN is bound by residues 80–82, Ser109, 130–132, and Thr158; these read PTG and QLY. An a 2-oxocarboxylate-binding site is contributed by Tyr132. Position 167 (Arg167) interacts with a 2-oxocarboxylate. FMN-binding residues include Lys231 and Ser253. His255 (proton acceptor) is an active-site residue. Arg258 contributes to the a 2-oxocarboxylate binding site. FMN is bound by residues 286–290 and 309–310; these read DGGIR and GR. The short motif at 364–366 is the Microbody targeting signal element; it reads SLL.

The protein belongs to the FMN-dependent alpha-hydroxy acid dehydrogenase family. As to quaternary structure, homotetramer. Binds to CATB and CATC; these interactions are disturbed by alpha-hydroxy-2-pyridinemethanesulfonic acid (HPMS) and salicylic acid (SA). It depends on FMN as a cofactor.

It is found in the peroxisome. It catalyses the reaction a (2S)-2-hydroxycarboxylate + O2 = a 2-oxocarboxylate + H2O2. It functions in the pathway lipid metabolism; fatty acid metabolism. Its function is as follows. Oxidase that catalyzes the oxidation of a broad range of 2-hydroxyacids to the corresponding 2-oxoacids, with a reduction of O2 to H2O2. May be involved in a general medium- and long-chain fatty acid catabolic pathway such as alpha-oxidation. The protein is Peroxisomal (S)-2-hydroxy-acid oxidase GLO4 (GLO4) of Oryza sativa subsp. japonica (Rice).